Consider the following 227-residue polypeptide: tRNA (guanine-N(1)-)-methyltransferase (227 aa).

Residues Gly107 and 127–132 (LGDFIL) contribute to the S-adenosyl-L-methionine site.

Belongs to the RNA methyltransferase TrmD family. Homodimer.

Its subcellular location is the cytoplasm. The catalysed reaction is guanosine(37) in tRNA + S-adenosyl-L-methionine = N(1)-methylguanosine(37) in tRNA + S-adenosyl-L-homocysteine + H(+). In terms of biological role, specifically methylates guanosine-37 in various tRNAs. The protein is tRNA (guanine-N(1)-)-methyltransferase of Mesomycoplasma hyopneumoniae (strain 7448) (Mycoplasma hyopneumoniae).